The chain runs to 218 residues: tRNA (guanine-N(7)-)-methyltransferase (218 aa).

S-adenosyl-L-methionine contacts are provided by Glu-46, Glu-71, Asp-98, and Asp-120. The active site involves Asp-120. Lys-124 contributes to the substrate binding site. The tract at residues 126 to 131 (RHEKRR) is interaction with RNA. Substrate is bound by residues Asp-156 and 196 to 199 (TEYE).

The protein belongs to the class I-like SAM-binding methyltransferase superfamily. TrmB family.

The enzyme catalyses guanosine(46) in tRNA + S-adenosyl-L-methionine = N(7)-methylguanosine(46) in tRNA + S-adenosyl-L-homocysteine. It functions in the pathway tRNA modification; N(7)-methylguanine-tRNA biosynthesis. Catalyzes the formation of N(7)-methylguanine at position 46 (m7G46) in tRNA. This chain is tRNA (guanine-N(7)-)-methyltransferase, found in Lactobacillus johnsonii (strain CNCM I-12250 / La1 / NCC 533).